Reading from the N-terminus, the 198-residue chain is V-type proton ATPase subunit E (198 aa).

It belongs to the V-ATPase E subunit family.

Its function is as follows. Produces ATP from ADP in the presence of a proton gradient across the membrane. The chain is V-type proton ATPase subunit E from Borrelia turicatae (strain 91E135).